The chain runs to 67 residues: Conotoxin Cl6.6b (67 aa).

The first 24 residues, Met1 to Ala24, serve as a signal peptide directing secretion. The propeptide occupies Thr25 to Pro37. 3 disulfides stabilise this stretch: Cys43–Cys57, Cys50–Cys61, and Cys56–Cys65.

It belongs to the conotoxin O1 superfamily. Expressed by the venom duct.

Its subcellular location is the secreted. In Californiconus californicus (California cone), this protein is Conotoxin Cl6.6b.